The primary structure comprises 1955 residues: Callose synthase 3 (1955 aa).

Residues 1–488 (MSATRGGPDQ…FWHVFRSFDR (488 aa)) lie on the Cytoplasmic side of the membrane. A helical transmembrane segment spans residues 489-509 (MWSFYILCLQAMIIMAWDGGQ). Over 510–521 (PSSVFGADVFKK) the chain is Extracellular. The helical transmembrane segment at 522–542 (VLSVFITAAIMKLGQAVLDVI) threads the bilayer. Over 543–558 (LNFKAHQSMTLHVKLR) the chain is Cytoplasmic. A helical transmembrane segment spans residues 559–579 (YILKVFSAAAWVIILPVTYAY). Residues 580–604 (SWKDPPAFARTIKSWFGSAMHSPSL) lie on the Extracellular side of the membrane. The helical transmembrane segment at 605-625 (FIIAVVSYLSPNMLAGVMFLF) threads the bilayer. The Cytoplasmic segment spans residues 626–660 (PLLRRFLERSNYRIVMLMMWWSQPRLYVGRGMHES). A helical transmembrane segment spans residues 661 to 681 (AFSLFKYTMFWVLLIATKLAF). Topologically, residues 682–717 (SYYIEIRPLVAPTQAIMKARVTNFQWHEFFPRAKNN) are extracellular. Residues 718 to 738 (IGVVIALWAPIILVYFMDSQI) traverse the membrane as a helical segment. Over 739–1517 (WYAIFSTLFG…FDFFRMMSCY (779 aa)) the chain is Cytoplasmic. The helical transmembrane segment at 1518–1538 (FTTVGFYFSTLITVLTVYIFL) threads the bilayer. The Extracellular portion of the chain corresponds to 1539–1566 (YGRLYLVLSGLEQGLSTQKGIRDNTPLQ). The chain crosses the membrane as a helical span at residues 1567–1587 (IALASQSFVQIGFLMALPMLM). Topologically, residues 1588–1597 (EIGLERGFRT) are cytoplasmic. The chain crosses the membrane as a helical span at residues 1598 to 1618 (ALSEFVLMQLQLAPVFFTFSL). The Extracellular portion of the chain corresponds to 1619 to 1661 (GTKTHYYGRTLLHGGAKYRSTGRGFVVFHAKFADNYRLYSRSH). A helical transmembrane segment spans residues 1662–1682 (FVKGLEMMLLLVVYQIFGSAY). At 1683-1688 (RGVLAY) the chain is on the cytoplasmic side. Residues 1689–1709 (LLITISMWFMVGTWLFAPFLF) traverse the membrane as a helical segment. Topologically, residues 1710–1761 (NPSGFEWQKIVDDWTDWNKWINNIGGIGVPAEKSWESWWEEEQEHLRYSGKR) are extracellular. A helical membrane pass occupies residues 1762 to 1782 (GIVVEILLALRFFIYQYGLVY). Residues 1783–1792 (HLTITEKTKN) are Cytoplasmic-facing. Residues 1793–1813 (FLVYGVSWLVIFLILFVMKTV) form a helical membrane-spanning segment. The Extracellular segment spans residues 1814 to 1833 (SVGRRRFSASFQLMFRLIKG). A helical transmembrane segment spans residues 1834–1854 (LIFMTFIAIIVILITLAHMTI). Topologically, residues 1855–1856 (QD) are cytoplasmic. The helical transmembrane segment at 1857 to 1877 (IIVCILAFMPTGWGMLLIAQA) threads the bilayer. Topologically, residues 1878–1899 (CKPVVHRAGFWGSVRTLARGYE) are extracellular. A helical transmembrane segment spans residues 1900-1920 (IVMGLLLFTPVAFLAWFPFVS). At 1921-1955 (EFQTRMLFNQAFSRGLQISRILGGHRKDRSSRNKE) the chain is on the cytoplasmic side.

The protein belongs to the glycosyltransferase 48 family.

It localises to the cell membrane. It catalyses the reaction [(1-&gt;3)-beta-D-glucosyl](n) + UDP-alpha-D-glucose = [(1-&gt;3)-beta-D-glucosyl](n+1) + UDP + H(+). Involved in callose synthesis at the forming cell plate during cytokinesis. During plant growth and development, callose is found as a transitory component of the cell plate in dividing cells, is a major component of pollen mother cell walls and pollen tubes, and is found as a structural component of plasmodesmatal canals. The chain is Callose synthase 3 (CALS3) from Arabidopsis thaliana (Mouse-ear cress).